We begin with the raw amino-acid sequence, 141 residues long: Probable trafficking protein particle complex subunit 2 (141 aa).

This sequence belongs to the TRAPP small subunits family. Sedlin subfamily. Part of the multisubunit TRAPP (transport protein particle) complex.

It is found in the cytoplasm. It localises to the perinuclear region. The protein localises to the endoplasmic reticulum. Its subcellular location is the golgi apparatus. May play a role in vesicular transport from endoplasmic reticulum to Golgi. Required for the systemic spread of the RNAi response. The sequence is that of Probable trafficking protein particle complex subunit 2 (sedl-1) from Caenorhabditis elegans.